The sequence spans 184 residues: ATP synthase subunit b, chloroplastic (184 aa).

A helical transmembrane segment spans residues 27–49; it reads LATNLINLSVVLGVLIFFGKGVL.

Belongs to the ATPase B chain family. F-type ATPases have 2 components, F(1) - the catalytic core - and F(0) - the membrane proton channel. F(1) has five subunits: alpha(3), beta(3), gamma(1), delta(1), epsilon(1). F(0) has four main subunits: a(1), b(1), b'(1) and c(10-14). The alpha and beta chains form an alternating ring which encloses part of the gamma chain. F(1) is attached to F(0) by a central stalk formed by the gamma and epsilon chains, while a peripheral stalk is formed by the delta, b and b' chains.

The protein resides in the plastid. The protein localises to the chloroplast thylakoid membrane. F(1)F(0) ATP synthase produces ATP from ADP in the presence of a proton or sodium gradient. F-type ATPases consist of two structural domains, F(1) containing the extramembraneous catalytic core and F(0) containing the membrane proton channel, linked together by a central stalk and a peripheral stalk. During catalysis, ATP synthesis in the catalytic domain of F(1) is coupled via a rotary mechanism of the central stalk subunits to proton translocation. In terms of biological role, component of the F(0) channel, it forms part of the peripheral stalk, linking F(1) to F(0). The chain is ATP synthase subunit b, chloroplastic from Spinacia oleracea (Spinach).